The sequence spans 141 residues: Large ribosomal subunit protein uL16 (141 aa).

Belongs to the universal ribosomal protein uL16 family. In terms of assembly, part of the 50S ribosomal subunit.

In terms of biological role, binds 23S rRNA and is also seen to make contacts with the A and possibly P site tRNAs. This Microchaete diplosiphon (Fremyella diplosiphon) protein is Large ribosomal subunit protein uL16.